We begin with the raw amino-acid sequence, 573 residues long: Acetolactate synthase large subunit (573 aa).

Position 51 (E51) interacts with thiamine diphosphate. FAD is bound by residues R153, 261 to 282 (HGTL…IGVR), and 304 to 323 (DIDP…IVGN). Residues 396–476 (QHQMFAALHY…VVIICLNNHF (81 aa)) form a thiamine pyrophosphate binding region. Residues D447 and N474 each coordinate Mg(2+).

The protein belongs to the TPP enzyme family. As to quaternary structure, dimer of large and small chains. Requires Mg(2+) as cofactor. Thiamine diphosphate serves as cofactor.

It catalyses the reaction 2 pyruvate + H(+) = (2S)-2-acetolactate + CO2. It participates in amino-acid biosynthesis; L-isoleucine biosynthesis; L-isoleucine from 2-oxobutanoate: step 1/4. The protein operates within amino-acid biosynthesis; L-valine biosynthesis; L-valine from pyruvate: step 1/4. This is Acetolactate synthase large subunit (ilvI) from Haemophilus influenzae (strain ATCC 51907 / DSM 11121 / KW20 / Rd).